Reading from the N-terminus, the 148-residue chain is UPF0260 protein Sfri_1740 (148 aa).

It belongs to the UPF0260 family.

This is UPF0260 protein Sfri_1740 from Shewanella frigidimarina (strain NCIMB 400).